Reading from the N-terminus, the 336-residue chain is UPF0324 membrane protein PM1461 (336 aa).

Helical transmembrane passes span 5 to 23 (TLFL…VNLL), 30 to 52 (LNAN…NTFY), 62 to 84 (GVIF…RLTL), 91 to 113 (GINA…LWLG), 123 to 140 (IVYL…AAIM), 153 to 175 (VSIA…PLMY), 221 to 238 (MIRV…SWLL), 250 to 271 (ISIP…FSLI), 275 to 297 (IVAW…LGLT), and 310 to 332 (PLIL…NVGI).

The protein belongs to the UPF0324 family.

The protein resides in the cell membrane. The polypeptide is UPF0324 membrane protein PM1461 (Pasteurella multocida (strain Pm70)).